The sequence spans 387 residues: Protoheme IX farnesyltransferase, mitochondrial (387 aa).

8 helical membrane passes run 95–115 (LTVLVVLSTMSSYALAPYPGL), 117–137 (FNTLAWLTMGTALCSISANAF), 183–203 (FLVNPTVGWLGLGNIVLYMGI), 212–232 (IVNTWVGSLVGAIPPLMGWAA), 242–262 (PGGLITAAMLFAWQFPHFNAF), 284–306 (ALNARVSLRYALAFLPLSYAYIS), 311–330 (GPWYAVPATGTNMFLIARAW), and 345–365 (FFASLLHLPLLFTLTLACHMI).

Belongs to the UbiA prenyltransferase family.

Its subcellular location is the mitochondrion membrane. The enzyme catalyses heme b + (2E,6E)-farnesyl diphosphate + H2O = Fe(II)-heme o + diphosphate. Converts protoheme IX and farnesyl diphosphate to heme O. In Schizosaccharomyces pombe (strain 972 / ATCC 24843) (Fission yeast), this protein is Protoheme IX farnesyltransferase, mitochondrial (cox10).